Here is a 2014-residue protein sequence, read N- to C-terminus: MANRSLKKVIETSSNNGHDLLTWITTNLEKLICLKEVNDNEIQEVKEIHTQLDEFVRYISVLENTDDLELHSVFISLSQLYTISIWRLKDEYPGVVFDSAAFLTNVLCEEDVSIDDGDTDPNQKKKKKKSSTKKKKYIYSPAKDIACTILVQLFENFGSSISSLIPLLFNAIFKNLKKIMEKSKYYHATFMTTLLQLFNAILRNSNNDDKILDPATYAKFSKLSKTVFDSISTDEKDFSVTFVSVLIECWTAHFKQTNFIREHSHDIIETIYSRFTEGEIGVYGFANDETRIFTAKSLAEILFDYYFSKNILTLQEVWSIYVKIFLNCDTRDVESGCFESIIHLINLNLLADNTFLSNSKYLDIVLSLSGVFSSYEVNNRSMNTLSRYLRYFQHMHEVILPHLNDSAKTQMLYYILGCSDTYQSSSKSDSASNFKYSIDAKPETQWLTLLQLDFTYVLISDLGSTFTTEENTVKEIRDKLVDLATCEIFTIRVHTVEILKVFLNNCPEYLSETIENSLRALSTDFKSTGKFIFHKNHGHAFIIANLIKGAESDYISYELIMRITVFSTSFIKNNTTSTSSNLYFKGLLCWILLIGLMNYKDEQYLKLQIPQLFLFWKVLLTHTYTYHDEDELYKNLEIRNHALTCLLTYLSNTTIDKEMAKQVSYLLTKCSNFNHSIDLKSKNIDNALLHNENRILQVYLKLEKYINSDFNSSLLILIVKNFSDPNLYTESSSSVLGSLKDIGNRKVSNKDDMESNIVLESSINTLLRQNNGFAFGLSSKITGDRIVNLSMSSAYKYDESISGSWPSKDYNWYNIFEVEVSKPISPILSLDSLILLYGSGSYSQIDRYAPQVTTSLIDSSMELFSSVFPFLNSKIQYSIMETLNLSMFSKMTTPLRSVAVAANVCSALHNALRIMQENNLELDYSVGQLIIESIKKIQFFNDIFLTKIKADCVGLLTAAIARTLGDEERQKFLTEQSRIFIKNVADMDEPYLRMFHVLSLATIFKYNSQYANFEEYFDVIFALMRDPHPVVHSWSLKAMHILLEKHLVIDLKTAALLLSSMEELLVQDKYGIYGRSTLRCNYNRDFNSHVAIGEISRTLTETVGPNFLELNTKVLDSFRNITLSMLISNNILNSITSIKMFENIATFKMKNILNYEIFILASKSIIKSSIVTGIGSSYFDTTFTGSNELISRTSSLKGAFENFDLLTLLYKLQMEEFFMKEMENLSWRYLALFPNSGSVKNYFTEWILHTFKRDNHWFDKLYSIFNMSLGRLFQSYNRDVSALLEVNGLKKSSEKEIKGEEEESIANVNQLTDTDAGGLDSENLQWKSRQIILNLILMLCLESEKYENLLLALSNKIADLIKISFRGSTVRNEGMKLTGLHILNFVLKNYSTMRDPQVPGSSILEQQEAQITSALMPAFSKGSSPTVMSFAITVAAEVLASNIMPPDKLGRISQLLIDLLGNFKDPNSGIRIGEAIIVTPKAKRKIELAVLDAWAEVVQRSITSSNDALFSFTRKYWSILVPLWIISLREYMMIKYNDNDSTVQVKNDSKENSLIEPRSTKIELYEPVWLNFVEALGCTLDSDVQVILASLNDEELEYFLFILFSQCLEAIVKNIDDHSVKMQVLPALHNVLKSNLCIKSIFEDDIITEVVEIMDRLISTGDSKEEFLLVDIISDLIIGYSKCNATPETFLQDIDKLYELLRLLMTIISERLPFIKYNVLTSEEDDNEIKISPTDISLLKKTFIAFESNISNFDNMFKVDLYSCLLFIIGKIYECSHREVIIPIILPLFKALVKALTESEDEKNIVLLEIFYGSIKDVIYHKLDSKNKVATILILLSNGYSKLSFQELNQCANILSEALNNPATQPIALQGFKRIISNIFKYPLLQYFMKLVIKRFFQDIQTNDSLSQASIKTKLIIQFSEEVIKQDHQKASLSIALCLSFFAAYHSAYTEKIDNEVASGIVALAKLDKNSFKEAISSTISPQQKAIIGSVMEAYVKSQSLGSVEEAFQLKSFD.

As to quaternary structure, interacts with the clathrin-associated adapter complex AP-1. Interacts directly with LAA2.

The protein localises to the golgi apparatus. Its subcellular location is the cytoplasmic vesicle. The protein resides in the clathrin-coated vesicle. Its function is as follows. Involved in localization of clathrin adapter protein complex-1 (AP-1) and subsequent AP-1-mediated clathrin-coated vesicle cargo loading. In complex with LAA2, cooperates with the small GTPase ARF1 and the phosphatidyl-inositol-4-phosphate (PI4P) synthesis to confer temporal specificity to AP-1 recruitment. This is AP-1 accessory protein LAA1 from Saccharomyces cerevisiae (strain ATCC 204508 / S288c) (Baker's yeast).